Here is a 284-residue protein sequence, read N- to C-terminus: 4-diphosphocytidyl-2-C-methyl-D-erythritol kinase (284 aa).

Lys-14 is an active-site residue. 98–108 (PMGGGLGGGSS) contacts ATP. Asp-140 is a catalytic residue.

It belongs to the GHMP kinase family. IspE subfamily.

It carries out the reaction 4-CDP-2-C-methyl-D-erythritol + ATP = 4-CDP-2-C-methyl-D-erythritol 2-phosphate + ADP + H(+). Its pathway is isoprenoid biosynthesis; isopentenyl diphosphate biosynthesis via DXP pathway; isopentenyl diphosphate from 1-deoxy-D-xylulose 5-phosphate: step 3/6. In terms of biological role, catalyzes the phosphorylation of the position 2 hydroxy group of 4-diphosphocytidyl-2C-methyl-D-erythritol. The polypeptide is 4-diphosphocytidyl-2-C-methyl-D-erythritol kinase (Shewanella putrefaciens (strain CN-32 / ATCC BAA-453)).